A 159-amino-acid polypeptide reads, in one-letter code: Urease accessory protein UreE (159 aa).

Belongs to the UreE family.

It is found in the cytoplasm. Its function is as follows. Involved in urease metallocenter assembly. Binds nickel. Probably functions as a nickel donor during metallocenter assembly. In Pseudomonas entomophila (strain L48), this protein is Urease accessory protein UreE.